The primary structure comprises 200 residues: Dephospho-CoA kinase (200 aa).

In terms of domain architecture, DPCK spans 4–200 (VIGLTGGIAS…VILKNWNIID (197 aa)). ATP is bound at residue 12–17 (ASGKST).

This sequence belongs to the CoaE family.

It is found in the cytoplasm. The catalysed reaction is 3'-dephospho-CoA + ATP = ADP + CoA + H(+). It participates in cofactor biosynthesis; coenzyme A biosynthesis; CoA from (R)-pantothenate: step 5/5. Its function is as follows. Catalyzes the phosphorylation of the 3'-hydroxyl group of dephosphocoenzyme A to form coenzyme A. The polypeptide is Dephospho-CoA kinase (Bacillus cereus (strain ATCC 10987 / NRS 248)).